Consider the following 271-residue polypeptide: Urease accessory protein UreD (271 aa).

The protein belongs to the UreD family. As to quaternary structure, ureD, UreF and UreG form a complex that acts as a GTP-hydrolysis-dependent molecular chaperone, activating the urease apoprotein by helping to assemble the nickel containing metallocenter of UreC. The UreE protein probably delivers the nickel.

The protein localises to the cytoplasm. Its function is as follows. Required for maturation of urease via the functional incorporation of the urease nickel metallocenter. The polypeptide is Urease accessory protein UreD (Halalkalibacterium halodurans (strain ATCC BAA-125 / DSM 18197 / FERM 7344 / JCM 9153 / C-125) (Bacillus halodurans)).